The chain runs to 222 residues: 25 kDa elongation factor 1-beta (222 aa).

Low complexity predominate over residues 75-94 (TSASAPAKQAPKKAASAPAK). Residues 75-98 (TSASAPAKQAPKKAASAPAKQADE) are disordered.

Belongs to the EF-1-beta/EF-1-delta family. In terms of assembly, EF-1 is composed of 4 subunits: alpha, beta, delta, and gamma.

Functionally, EF-1-beta and EF-1-delta stimulate the exchange of GDP bound to EF-1-alpha to GTP. This is 25 kDa elongation factor 1-beta from Trypanosoma cruzi.